Reading from the N-terminus, the 209-residue chain is Uracil phosphoribosyltransferase (209 aa).

5-phospho-alpha-D-ribose 1-diphosphate-binding positions include Arg79, Arg104, and 131-139 (DPMLATGGS). Uracil-binding positions include Ile194 and 199 to 201 (GDA). Asp200 is a binding site for 5-phospho-alpha-D-ribose 1-diphosphate.

Belongs to the UPRTase family. The cofactor is Mg(2+).

The enzyme catalyses UMP + diphosphate = 5-phospho-alpha-D-ribose 1-diphosphate + uracil. It participates in pyrimidine metabolism; UMP biosynthesis via salvage pathway; UMP from uracil: step 1/1. Its activity is regulated as follows. Allosterically activated by GTP. In terms of biological role, catalyzes the conversion of uracil and 5-phospho-alpha-D-ribose 1-diphosphate (PRPP) to UMP and diphosphate. This Streptococcus suis (strain 05ZYH33) protein is Uracil phosphoribosyltransferase.